A 259-amino-acid chain; its full sequence is uncharacterized protein (259 aa).

The segment at residues 1 to 19 is a signal peptide (or 26); that stretch reads MKLSVKIAGVLTVAAAAMT. 214–221 lines the ATP pocket; sequence GPYELGKT.

This is an uncharacterized protein from Bacillus subtilis (strain 168).